A 339-amino-acid chain; its full sequence is Trace amine-associated receptor 2 (339 aa).

The Extracellular segment spans residues 1-36 (MTSFEAQQETFDCSEYGNGSCPENERSLGVRAAMYS). Residue asparagine 18 is glycosylated (N-linked (GlcNAc...) asparagine). Intrachain disulfides connect cysteine 21/cysteine 185 and cysteine 104/cysteine 189. Residues 37–57 (LMAGAIFITIFGNLVMIISIS) traverse the membrane as a helical segment. Residues 58 to 67 (YFKQLHTPTN) lie on the Cytoplasmic side of the membrane. The chain crosses the membrane as a helical span at residues 68 to 88 (LLILSMAVTDFLLGFTIMPYS). At 89–106 (MVRSVENCWYFGLTFCKI) the chain is on the extracellular side. A helical transmembrane segment spans residues 107-127 (HYSFDLMLSITSIFHLCSVAI). Residues 128-150 (DRFYAICHPLHYCTKMTIPVVKR) lie on the Cytoplasmic side of the membrane. A helical membrane pass occupies residues 151-171 (LLLVCWSVPGAFAFGVVFSEA). The Extracellular portion of the chain corresponds to 172-195 (YADGIEGYDILVACSSSCPVMFNK). A helical transmembrane segment spans residues 196–216 (LWGTTLFVAGFFTPSSMMVGI). The Cytoplasmic portion of the chain corresponds to 217 to 251 (YGKIFAVSKKHARVIDNLPENQNNQMRKDKKAAKT). A helical membrane pass occupies residues 252 to 272 (LGIVMGVFLLCWFPCFFTILL). Residues 273-287 (DPFLNFSTPAILFDA) lie on the Extracellular side of the membrane. Asparagine 277 carries N-linked (GlcNAc...) asparagine glycosylation. The chain crosses the membrane as a helical span at residues 288–310 (LTWFGYFNSTCNPLIYGFFYPWF). The Cytoplasmic portion of the chain corresponds to 311–339 (RRALRYILLGKIFSSHFHNTNLFTQKETE).

It belongs to the G-protein coupled receptor 1 family.

The protein localises to the cell membrane. In terms of biological role, orphan olfactory receptor specific for trace amines. Trace amine compounds are enriched in animal body fluids and act on trace amine-associated receptors (TAARs) to elicit both intraspecific and interspecific innate behaviors. Ligand-binding causes a conformation change that triggers signaling via the G(s)-class of G-proteins which activate adenylate cyclase. May also be required to provide olfactory input into limbic brain areas to regulate emotional behaviors likely via modulation of the dopamine system. The sequence is that of Trace amine-associated receptor 2 (Taar2) from Rattus norvegicus (Rat).